Consider the following 466-residue polypeptide: Probable ribonuclease FAU-1 (466 aa).

The S1 motif domain maps to 90–152; sequence GAIYAGTVTD…TDGRPVLDTT (63 aa).

It belongs to the FAU-1 family.

Its function is as follows. Probable RNase involved in rRNA stability through maturation and/or degradation of precursor rRNAs. Binds to RNA in loop regions with AU-rich sequences. This Haloarcula marismortui (strain ATCC 43049 / DSM 3752 / JCM 8966 / VKM B-1809) (Halobacterium marismortui) protein is Probable ribonuclease FAU-1.